The chain runs to 570 residues: MLSDINISRKHVCKPIAEIATNLGIVESELSVHGANKAKISLSVTNRLASKPDAKLVIVTAVTPTPYGEGKTVTTVGLTQAMNAIGVKTCACIRQPSMGPVFGIKGGAAGGGYAQVVPMEELNLHLTGDIHAVSSAHNLAAAAIDARLFHETRLGAIAFTKESGLNAVNIDPENILWRRVVDHNERSLRQIEVGFGAVNGPVHSSGFDITKASELMAILALSRDVKDLRQRVGRLVLALDLVGKPITAEDIGVAGAMTVIMRDAIEPTLMQTLSGDPCFIHAGPFANIAHGNSSIIADSIASKLADVVVTEAGFGSDMGFEKFSNIKVRESGYKPSAAVVVVTLRALKANSGIESEVAIDQPDMARLEAGFANLQWHINNVHQYGAPVVVAINRFPTDTSAELDWLQAKVATTNAFGCAISDAFANGAQGAAELAKVVHAATMVESEFNCLYETTDTLESKLMTLAEVGYGAASVSLSDKAKLQLAWLHKQGYSELPVCIAKTPMSISHDPNVKGVPRNFELPINELRLNAGAGFITALVGKVMTMPGLGIKPGYLNIDIDADDEIIGLA.

65–72 (TPYGEGKT) is a binding site for ATP.

This sequence belongs to the formate--tetrahydrofolate ligase family.

It catalyses the reaction (6S)-5,6,7,8-tetrahydrofolate + formate + ATP = (6R)-10-formyltetrahydrofolate + ADP + phosphate. It participates in one-carbon metabolism; tetrahydrofolate interconversion. This is Formate--tetrahydrofolate ligase from Shewanella piezotolerans (strain WP3 / JCM 13877).